A 204-amino-acid polypeptide reads, in one-letter code: Pyridoxamine 5'-phosphate oxidase YLR456W homolog (204 aa).

FMN-binding positions include 65-66 and N127; that span reads FT.

Belongs to the pyridoxamine 5'-phosphate oxidase family. It depends on FMN as a cofactor.

It localises to the cytoplasm. Its subcellular location is the nucleus. The sequence is that of Pyridoxamine 5'-phosphate oxidase YLR456W homolog from Saccharomyces cerevisiae (strain ATCC 204508 / S288c) (Baker's yeast).